The sequence spans 98 residues: Large ribosomal subunit protein eL21 (98 aa).

A disordered region spans residues 1-22 (MVQMSEGFRRKTRKKLSKHPRE). Over residues 10-21 (RKTRKKLSKHPR) the composition is skewed to basic residues.

This sequence belongs to the eukaryotic ribosomal protein eL21 family.

In Methanocaldococcus jannaschii (strain ATCC 43067 / DSM 2661 / JAL-1 / JCM 10045 / NBRC 100440) (Methanococcus jannaschii), this protein is Large ribosomal subunit protein eL21 (rpl21e).